A 284-amino-acid chain; its full sequence is NADH-cytochrome b5 reductase 1 (284 aa).

A helical membrane pass occupies residues 8 to 28; it reads PFIIFATVAAIISSAVAYYFF. The region spanning 41 to 144 is the FAD-binding FR-type domain; the sequence is NDFQKFPLIE…RGPKGFFTYT (104 aa). FAD is bound by residues 124–139 and 150–182; these read ESKK…GPKG and SFGM…KVSL.

It belongs to the flavoprotein pyridine nucleotide cytochrome reductase family. In terms of assembly, monomer. Component of the 2-(3-amino-3-carboxypropyl)histidine synthase complex composed of DPH1, DPH2, DPH3 and a NADH-dependent reductase, predominantly CBR1. The cofactor is FAD.

It localises to the mitochondrion outer membrane. It catalyses the reaction 2 Fe(III)-[cytochrome b5] + NADH = 2 Fe(II)-[cytochrome b5] + NAD(+) + H(+). The enzyme catalyses 2 Fe(3+)-[Dph3] + NADH = 2 Fe(2+)-[Dph3] + NAD(+) + H(+). It participates in protein modification; peptidyl-diphthamide biosynthesis. Its function is as follows. NADH-dependent reductase for DPH3 and cytochrome b5. Required for the first step of diphthamide biosynthesis, a post-translational modification of histidine which occurs in elongation factor 2. DPH1 and DPH2 transfer a 3-amino-3-carboxypropyl (ACP) group from S-adenosyl-L-methionine (SAM) to a histidine residue, the reaction is assisted by a reduction system comprising DPH3 and a NADH-dependent reductase, predominantly CBR1. By reducing DPH3, also involved in the formation of the tRNA wobble base modification mcm5s 2U (5-methoxycarbonylmethyl-2-thiouridine), mediated by the elongator complex. The cytochrome b5/NADH cytochrome b5 reductase electron transfer system supports the catalytic activity of several sterol biosynthetic enzymes. The sequence is that of NADH-cytochrome b5 reductase 1 (CBR1) from Debaryomyces hansenii (strain ATCC 36239 / CBS 767 / BCRC 21394 / JCM 1990 / NBRC 0083 / IGC 2968) (Yeast).